The chain runs to 227 residues: Phosphoribosylformylglycinamidine synthase subunit PurQ (227 aa).

The Glutamine amidotransferase type-1 domain maps to Ser3 to Lys227. Cys85 acts as the Nucleophile in catalysis. Catalysis depends on residues His201 and Glu203.

Part of the FGAM synthase complex composed of 1 PurL, 1 PurQ and 2 PurS subunits.

It is found in the cytoplasm. It catalyses the reaction N(2)-formyl-N(1)-(5-phospho-beta-D-ribosyl)glycinamide + L-glutamine + ATP + H2O = 2-formamido-N(1)-(5-O-phospho-beta-D-ribosyl)acetamidine + L-glutamate + ADP + phosphate + H(+). It carries out the reaction L-glutamine + H2O = L-glutamate + NH4(+). Its pathway is purine metabolism; IMP biosynthesis via de novo pathway; 5-amino-1-(5-phospho-D-ribosyl)imidazole from N(2)-formyl-N(1)-(5-phospho-D-ribosyl)glycinamide: step 1/2. Functionally, part of the phosphoribosylformylglycinamidine synthase complex involved in the purines biosynthetic pathway. Catalyzes the ATP-dependent conversion of formylglycinamide ribonucleotide (FGAR) and glutamine to yield formylglycinamidine ribonucleotide (FGAM) and glutamate. The FGAM synthase complex is composed of three subunits. PurQ produces an ammonia molecule by converting glutamine to glutamate. PurL transfers the ammonia molecule to FGAR to form FGAM in an ATP-dependent manner. PurS interacts with PurQ and PurL and is thought to assist in the transfer of the ammonia molecule from PurQ to PurL. The protein is Phosphoribosylformylglycinamidine synthase subunit PurQ of Pelagibacter ubique (strain HTCC1062).